Consider the following 110-residue polypeptide: Phosphoribosyl-ATP pyrophosphatase (110 aa).

The protein belongs to the PRA-PH family.

It localises to the cytoplasm. The enzyme catalyses 1-(5-phospho-beta-D-ribosyl)-ATP + H2O = 1-(5-phospho-beta-D-ribosyl)-5'-AMP + diphosphate + H(+). It participates in amino-acid biosynthesis; L-histidine biosynthesis; L-histidine from 5-phospho-alpha-D-ribose 1-diphosphate: step 2/9. This is Phosphoribosyl-ATP pyrophosphatase from Clostridium botulinum (strain ATCC 19397 / Type A).